A 437-amino-acid polypeptide reads, in one-letter code: Eukaryotic peptide chain release factor subunit 1 (437 aa).

Ala-2 is modified (N-acetylalanine). The short motif at 61–64 is the NIKS motif; plays an important role in translational termination element; it reads NIKS. A 4-hydroxylysine modification is found at Lys-63. Lys-87 participates in a covalent cross-link: Glycyl lysine isopeptide (Lys-Gly) (interchain with G-Cter in SUMO2). Position 185 is an N5-methylglutamine (Gln-185). The residue at position 347 (Thr-347) is a Phosphothreonine. A Glycyl lysine isopeptide (Lys-Gly) (interchain with G-Cter in SUMO2) cross-link involves residue Lys-404.

It belongs to the eukaryotic release factor 1 family. In terms of assembly, component of the eRF1-eRF3-GTP ternary complex, composed of ETF1/ERF1 and eRF3 (GSPT1/ERF3A or GSPT2/ERF3B) and GTP. Component of the transient SURF (SMG1-UPF1-eRF1-eRF3) complex. Interacts with JMJD4. The ETF1-GSPT1 complex interacts with JMJD4. In terms of processing, hydroxylation at Lys-63 by JMJD4 promotes its translational termination efficiency. Methylated at Gln-185 by N6AMT1. Post-translationally, ubiquitinated via 'Lys-6'-linked polyubiquitin chains by RNF14 and RNF25 in response to ribosome collisions (ribosome stalling), leading to its degradation by the proteasome and rescue of stalled ribosomes.

The protein localises to the cytoplasm. Functionally, component of the eRF1-eRF3-GTP ternary complex, a ternary complex that mediates translation termination in response to the termination codons. The eRF1-eRF3-GTP complex binds to a stop codon in the ribosomal A-site. ETF1/ERF1 is responsible for stop codon recognition and inducing hydrolysis of peptidyl-tRNA. Following GTP hydrolysis, eRF3 (GSPT1/ERF3A or GSPT2/ERF3B) dissociates, permitting ETF1/eRF1 to accommodate fully in the A-site, followed by hydrolysis of peptidyl-tRNA. Component of the transient SURF complex which recruits UPF1 to stalled ribosomes in the context of nonsense-mediated decay (NMD) of mRNAs containing premature stop codons. Required for SHFL-mediated translation termination which inhibits programmed ribosomal frameshifting (-1PRF) of mRNA from viruses and cellular genes. The sequence is that of Eukaryotic peptide chain release factor subunit 1 (ETF1) from Pongo abelii (Sumatran orangutan).